The primary structure comprises 341 residues: S-adenosylmethionine:tRNA ribosyltransferase-isomerase (341 aa).

This sequence belongs to the QueA family. As to quaternary structure, monomer.

It is found in the cytoplasm. The enzyme catalyses 7-aminomethyl-7-carbaguanosine(34) in tRNA + S-adenosyl-L-methionine = epoxyqueuosine(34) in tRNA + adenine + L-methionine + 2 H(+). It participates in tRNA modification; tRNA-queuosine biosynthesis. Its function is as follows. Transfers and isomerizes the ribose moiety from AdoMet to the 7-aminomethyl group of 7-deazaguanine (preQ1-tRNA) to give epoxyqueuosine (oQ-tRNA). The polypeptide is S-adenosylmethionine:tRNA ribosyltransferase-isomerase (Herminiimonas arsenicoxydans).